The chain runs to 214 residues: Guanylate kinase (214 aa).

A Guanylate kinase-like domain is found at 6–192; that stretch reads GTLYIISAPS…ALEDLKAIFR (187 aa). 13 to 20 lines the ATP pocket; it reads APSGAGKT.

It belongs to the guanylate kinase family.

The protein resides in the cytoplasm. It catalyses the reaction GMP + ATP = GDP + ADP. Functionally, essential for recycling GMP and indirectly, cGMP. This chain is Guanylate kinase, found in Pseudomonas syringae pv. syringae (strain B728a).